A 468-amino-acid polypeptide reads, in one-letter code: Plant UBX domain-containing protein 7 (468 aa).

Methionine 1 is modified (N-acetylmethionine). Positions 7 to 48 constitute a UBA-like domain; it reads SGDQQRLVSSFLEIAVGQTAETARQFLQATSWKLEEAIQLFY. Disordered regions lie at residues 138–168 and 299–329; these read KSPG…SAPR and HFAS…KDEE. Residues 150–166 are compositionally biased toward low complexity; it reads SSASASASASASESASA. The UIM domain maps to 328-347; it reads EEEEELQRALAASLEDNNMK. The region spanning 385 to 466 is the UBX domain; that stretch reads DRSLQCRVGI…GVANSMISAT (82 aa).

As to quaternary structure, interacts with CDC48A via its UBX domain and with ubiquitin via its N-terminal UBA-like domain. In terms of tissue distribution, expressed broadly in sporophyte and gametophyte cells.

The protein resides in the nucleus. Acts as a bridge between CDC48A and ubiquitin, suggesting a role in targeted protein degradation. This chain is Plant UBX domain-containing protein 7, found in Arabidopsis thaliana (Mouse-ear cress).